Consider the following 141-residue polypeptide: Nucleoside diphosphate kinase (141 aa).

Positions 9, 57, 85, 91, 102, and 112 each coordinate ATP. The Pros-phosphohistidine intermediate role is filled by histidine 115.

Belongs to the NDK family. In terms of assembly, homotetramer. It depends on Mg(2+) as a cofactor.

It is found in the cytoplasm. The enzyme catalyses a 2'-deoxyribonucleoside 5'-diphosphate + ATP = a 2'-deoxyribonucleoside 5'-triphosphate + ADP. It catalyses the reaction a ribonucleoside 5'-diphosphate + ATP = a ribonucleoside 5'-triphosphate + ADP. Major role in the synthesis of nucleoside triphosphates other than ATP. The ATP gamma phosphate is transferred to the NDP beta phosphate via a ping-pong mechanism, using a phosphorylated active-site intermediate. The chain is Nucleoside diphosphate kinase from Chlamydia trachomatis serovar L2 (strain ATCC VR-902B / DSM 19102 / 434/Bu).